Reading from the N-terminus, the 483-residue chain is Glutamyl-tRNA(Gln) amidotransferase subunit A (483 aa).

Residues K76 and S151 each act as charge relay system in the active site. The Acyl-ester intermediate role is filled by S175.

It belongs to the amidase family. GatA subfamily. In terms of assembly, heterotrimer of A, B and C subunits.

The enzyme catalyses L-glutamyl-tRNA(Gln) + L-glutamine + ATP + H2O = L-glutaminyl-tRNA(Gln) + L-glutamate + ADP + phosphate + H(+). Allows the formation of correctly charged Gln-tRNA(Gln) through the transamidation of misacylated Glu-tRNA(Gln) in organisms which lack glutaminyl-tRNA synthetase. The reaction takes place in the presence of glutamine and ATP through an activated gamma-phospho-Glu-tRNA(Gln). This is Glutamyl-tRNA(Gln) amidotransferase subunit A from Pseudomonas putida (strain W619).